Consider the following 465-residue polypeptide: GTPase Der (465 aa).

EngA-type G domains lie at 3–167 and 179–352; these read PLVA…PEEG and VRIA…ASAT. GTP is bound by residues 9 to 16, 57 to 61, 119 to 122, 185 to 192, 232 to 236, and 297 to 300; these read GRPNVGKS, DTGGI, NKID, DTAGL, and NKWD. Positions 353 to 437 constitute a KH-like domain; it reads HEFSTSEVNQ…PVRFIFREGA (85 aa).

Belongs to the TRAFAC class TrmE-Era-EngA-EngB-Septin-like GTPase superfamily. EngA (Der) GTPase family. Associates with the 50S ribosomal subunit.

Functionally, GTPase that plays an essential role in the late steps of ribosome biogenesis. The polypeptide is GTPase Der (Xanthomonas campestris pv. campestris (strain 8004)).